Consider the following 381-residue polypeptide: Neutral protease 2 homolog mep20 (381 aa).

Positions 1–19 (MRFTALASAILPLACNVLA) are cleaved as a signal peptide. Positions 20-193 (LPAKTGEAPK…ASAVKPLDKR (174 aa)) are excised as a propeptide. Disulfide bonds link Cys199/Cys271 and Cys278/Cys296. His321 contacts Zn(2+). Glu322 is an active-site residue. Residues His325 and Asp336 each contribute to the Zn(2+) site.

The protein belongs to the peptidase M35 family. Zn(2+) is required as a cofactor.

It catalyses the reaction Preferential cleavage of bonds with hydrophobic residues in P1'. Also 3-Asn-|-Gln-4 and 8-Gly-|-Ser-9 bonds in insulin B chain.. Its function is as follows. Secreted metalloproteinase that allows assimilation of proteinaceous substrates. Shows high activities on basic nuclear substrates such as histone and protamine. The sequence is that of Neutral protease 2 homolog mep20 (mep20) from Aspergillus flavus.